The chain runs to 126 residues: Large ribosomal subunit protein bL19 (126 aa).

This sequence belongs to the bacterial ribosomal protein bL19 family.

In terms of biological role, this protein is located at the 30S-50S ribosomal subunit interface and may play a role in the structure and function of the aminoacyl-tRNA binding site. The protein is Large ribosomal subunit protein bL19 of Gluconacetobacter diazotrophicus (strain ATCC 49037 / DSM 5601 / CCUG 37298 / CIP 103539 / LMG 7603 / PAl5).